Consider the following 433-residue polypeptide: GTPase Der (433 aa).

EngA-type G domains lie at 3-167 (KIVS…DKNI) and 175-349 (PRIA…FNLR). GTP contacts are provided by residues 9–16 (GRPNVGKS), 56–60 (DTGGY), 119–122 (NKID), 181–188 (GRPNVGKS), 228–232 (DTAGI), and 293–296 (NKWD). The region spanning 350–433 (LRIKTSLLNK…IPIKILFRLK (84 aa)) is the KH-like domain.

It belongs to the TRAFAC class TrmE-Era-EngA-EngB-Septin-like GTPase superfamily. EngA (Der) GTPase family. In terms of assembly, associates with the 50S ribosomal subunit.

In terms of biological role, GTPase that plays an essential role in the late steps of ribosome biogenesis. This is GTPase Der from Karelsulcia muelleri (strain GWSS) (Sulcia muelleri).